Here is a 593-residue protein sequence, read N- to C-terminus: NADH-quinone oxidoreductase subunit C/D (593 aa).

The tract at residues 1 to 184 (MTADNALYIP…DPYSLTLAKQ (184 aa)) is NADH dehydrogenase I subunit C. The segment at 208-593 (DYMFLNLGPN…IDFVMADVDR (386 aa)) is NADH dehydrogenase I subunit D.

This sequence in the N-terminal section; belongs to the complex I 30 kDa subunit family. The protein in the C-terminal section; belongs to the complex I 49 kDa subunit family. As to quaternary structure, NDH-1 is composed of 13 different subunits. Subunits NuoB, CD, E, F, and G constitute the peripheral sector of the complex.

Its subcellular location is the cell inner membrane. The enzyme catalyses a quinone + NADH + 5 H(+)(in) = a quinol + NAD(+) + 4 H(+)(out). Its function is as follows. NDH-1 shuttles electrons from NADH, via FMN and iron-sulfur (Fe-S) centers, to quinones in the respiratory chain. The immediate electron acceptor for the enzyme in this species is believed to be ubiquinone. Couples the redox reaction to proton translocation (for every two electrons transferred, four hydrogen ions are translocated across the cytoplasmic membrane), and thus conserves the redox energy in a proton gradient. The chain is NADH-quinone oxidoreductase subunit C/D from Pseudomonas syringae pv. syringae (strain B728a).